Here is a 71-residue protein sequence, read N- to C-terminus: Putative RNA-binding regulatory peptide (71 aa).

As to quaternary structure, interacts with IGF2BP1 (via KH3 and KH4 domains); the interaction results in increased binding of IGF2BP1 to N6-methyladenosine (m6A)-containing mRNAs. As to expression, detected in colon (at protein level).

Functionally, enhances binding of IGF2BP1 to N6-methyladenosine (m6A)-containing mRNAs, thereby contributing to increased mRNA stability. Also increases the interaction of IGF2BP1 with RNA stabilizers ELAVL1/HUR, MATR3 and PABPC1, and increases the interaction of RNA stabilizers ELAVL1/HUR, MATR3 and PABPC1 with m6A-containing mRNAs. Contributes to MYC stability by enhancing binding of IGF2BP1 to m6A-containing MYC mRNAs and increasing recruitment of RNA stabilizing proteins to m6A-containing MYC mRNAs. The protein is Putative RNA-binding regulatory peptide of Homo sapiens (Human).